A 361-amino-acid chain; its full sequence is Spermidine/putrescine import ATP-binding protein PotA (361 aa).

The ABC transporter domain maps to 4–234 (LEIKNVVKRF…PKNRFVADFL (231 aa)). An ATP-binding site is contributed by 36-43 (GPSGCGKT).

It belongs to the ABC transporter superfamily. Spermidine/putrescine importer (TC 3.A.1.11.1) family. As to quaternary structure, the complex is composed of two ATP-binding proteins (PotA), two transmembrane proteins (PotB and PotC) and a solute-binding protein (PotD).

It is found in the cell inner membrane. It catalyses the reaction ATP + H2O + polyamine-[polyamine-binding protein]Side 1 = ADP + phosphate + polyamineSide 2 + [polyamine-binding protein]Side 1.. Its function is as follows. Part of the ABC transporter complex PotABCD involved in spermidine/putrescine import. Responsible for energy coupling to the transport system. In Chromobacterium violaceum (strain ATCC 12472 / DSM 30191 / JCM 1249 / CCUG 213 / NBRC 12614 / NCIMB 9131 / NCTC 9757 / MK), this protein is Spermidine/putrescine import ATP-binding protein PotA.